The following is a 352-amino-acid chain: N-acetyl-gamma-glutamyl-phosphate reductase (352 aa).

Residue Cys-155 is part of the active site.

Belongs to the NAGSA dehydrogenase family. Type 1 subfamily.

It localises to the cytoplasm. The catalysed reaction is N-acetyl-L-glutamate 5-semialdehyde + phosphate + NADP(+) = N-acetyl-L-glutamyl 5-phosphate + NADPH + H(+). It functions in the pathway amino-acid biosynthesis; L-arginine biosynthesis; N(2)-acetyl-L-ornithine from L-glutamate: step 3/4. Its function is as follows. Catalyzes the NADPH-dependent reduction of N-acetyl-5-glutamyl phosphate to yield N-acetyl-L-glutamate 5-semialdehyde. The sequence is that of N-acetyl-gamma-glutamyl-phosphate reductase from Gloeothece citriformis (strain PCC 7424) (Cyanothece sp. (strain PCC 7424)).